The chain runs to 428 residues: Kynureninase (428 aa).

Pyridoxal 5'-phosphate contacts are provided by residues threonine 104, threonine 105, 132 to 135, aspartate 213, histidine 216, and tyrosine 238; that span reads FPSD. An N6-(pyridoxal phosphate)lysine modification is found at lysine 239. Pyridoxal 5'-phosphate-binding residues include tryptophan 267 and threonine 295.

This sequence belongs to the kynureninase family. In terms of assembly, homodimer. Pyridoxal 5'-phosphate is required as a cofactor.

The catalysed reaction is L-kynurenine + H2O = anthranilate + L-alanine + H(+). It catalyses the reaction 3-hydroxy-L-kynurenine + H2O = 3-hydroxyanthranilate + L-alanine + H(+). It functions in the pathway amino-acid degradation; L-kynurenine degradation; L-alanine and anthranilate from L-kynurenine: step 1/1. Its pathway is cofactor biosynthesis; NAD(+) biosynthesis; quinolinate from L-kynurenine: step 2/3. Its function is as follows. Catalyzes the cleavage of L-kynurenine (L-Kyn) and L-3-hydroxykynurenine (L-3OHKyn) into anthranilic acid (AA) and 3-hydroxyanthranilic acid (3-OHAA), respectively. This is Kynureninase from Geobacillus thermodenitrificans (strain NG80-2).